We begin with the raw amino-acid sequence, 336 residues long: Terephthalate 1,2-dioxygenase, reductase component 1 (336 aa).

In terms of domain architecture, 2Fe-2S ferredoxin-type spans 3–91; the sequence is HQIHIHDSDI…DIRIQPSSFR (89 aa). C37, C42, C45, and C75 together coordinate [2Fe-2S] cluster. The FAD-binding FR-type domain occupies 98-197; sequence RKRFTAKVYS…ELPFGSIALK (100 aa).

As to quaternary structure, monomer. Part of a multicomponent enzyme system composed of a reductase (TphA1I or TphA1II) and a two-subunit oxygenase component (TphA2I or TphA2II and TphA3I or TphA3II). FAD is required as a cofactor. Requires [2Fe-2S] cluster as cofactor.

It catalyses the reaction terephthalate + NADH + O2 + H(+) = (3S,4R)-3,4-dihydroxycyclohexa-1,5-diene-1,4-dicarboxylate + NAD(+). In terms of biological role, component of the terephthalate 1,2-dioxygenase multicomponent enzyme system which catalyzes the dioxygenation of terephthalate (TER/TPA) to 1,2-dihydroxy-3,5-cyclohexadiene-1,4-dicarboxylic acid (DCD). TphA1 probably reduces TphA2A3. It can also use 2,5-dicarboxypyridine (PDC) and 1,4-napthalenedicarboxylic acid (NDC) as substrates, and preferentially uses NADPH which is the physiological electron donor. This Comamonas sp protein is Terephthalate 1,2-dioxygenase, reductase component 1 (tphA1I).